The following is a 226-amino-acid chain: 7-cyano-7-deazaguanine synthase (226 aa).

10–20 provides a ligand contact to ATP; the sequence is FSGGQDSTTLA. 4 residues coordinate Zn(2+): Cys-190, Cys-205, Cys-208, and Cys-211.

The protein belongs to the QueC family. Requires Zn(2+) as cofactor.

It catalyses the reaction 7-carboxy-7-deazaguanine + NH4(+) + ATP = 7-cyano-7-deazaguanine + ADP + phosphate + H2O + H(+). It functions in the pathway purine metabolism; 7-cyano-7-deazaguanine biosynthesis. Its function is as follows. Catalyzes the ATP-dependent conversion of 7-carboxy-7-deazaguanine (CDG) to 7-cyano-7-deazaguanine (preQ(0)). The polypeptide is 7-cyano-7-deazaguanine synthase (Helicobacter pylori (strain Shi470)).